The following is a 472-amino-acid chain: MSPEEWTYLVVLLISIPIGFLFKKAGPGLKRWGAAAVGLGLTLFTCGPHTLHSLVTILGTWALIQAQPCSCHALALAWTFSYLLFFRALSLLGLPTPTPFTNAVQLLLTLKLVSLASEVQDLHVAQRKEMASGFSKGPPLGLLPDVPSLMETLSYSYCYVGIMTGPFFRYRTYLDWLEQPFPGAVPSLRPLLRRAWPAPLFGLLFLLSSHLFPLEAVREDAFYARPLPARLFYMIPVFFAFRMRFYVAWIAAECGCIAAGFGAYPVAAKARAGGGPTLQCPPPSSPEMAASLEYDYETIRNIDCYNTDFCVTVREGMRYWNMTVQWWLAQYIYKSAPARSYVLRSAWTMLLSAYWHGLHPGYYLSFLTIPLCLAAERQLESALRWRLGPGGQKAWDWVHWFLKMRAYDYMSMGFVLLSLRDTLRYWASVYFCVHVLALAALGLGLALGRGGPGRRKSGAPAPSPASGKLREE.

The Cytoplasmic portion of the chain corresponds to 1–5 (MSPEE). Residues 6–22 (WTYLVVLLISIPIGFLF) traverse the membrane as a helical segment. Over 23 to 33 (KKAGPGLKRWG) the chain is Lumenal. Residues 34–57 (AAAVGLGLTLFTCGPHTLHSLVTI) form a helical membrane-spanning segment. At 58–73 (LGTWALIQAQPCSCHA) the chain is on the cytoplasmic side. A helical membrane pass occupies residues 74 to 93 (LALAWTFSYLLFFRALSLLG). The Lumenal segment spans residues 94–194 (LPTPTPFTNA…VPSLRPLLRR (101 aa)). Residues 195–212 (AWPAPLFGLLFLLSSHLF) traverse the membrane as a helical segment. The Cytoplasmic segment spans residues 213-231 (PLEAVREDAFYARPLPARL). Residues 232–261 (FYMIPVFFAFRMRFYVAWIAAECGCIAAGF) form a helical membrane-spanning segment. Over 262 to 426 (GAYPVAAKAR…LSLRDTLRYW (165 aa)) the chain is Lumenal. A glycan (N-linked (GlcNAc...) asparagine) is linked at Asn321. A helical membrane pass occupies residues 427–447 (ASVYFCVHVLALAALGLGLAL). Residues 448-472 (GRGGPGRRKSGAPAPSPASGKLREE) are Cytoplasmic-facing. The interval 450 to 472 (GGPGRRKSGAPAPSPASGKLREE) is disordered.

This sequence belongs to the membrane-bound acyltransferase family. In terms of assembly, interacts with SPTSSA; the interaction facilitates MBOAT7 location to mitochondria-associated membranes (MAMs).

The protein localises to the endoplasmic reticulum membrane. It carries out the reaction a 1-acyl-sn-glycero-3-phospho-(1D-myo-inositol) + an acyl-CoA = a 1,2-diacyl-sn-glycero-3-phospho-(1D-myo-inositol) + CoA. The enzyme catalyses a 1-acyl-sn-glycero-3-phospho-(1D-myo-inositol) + (5Z,8Z,11Z,14Z)-eicosatetraenoyl-CoA = a 1-acyl-2-(5Z,8Z,11Z,14Z-eicosatetraenoyl)-sn-glycero-3-phospho-(1D-myo-inositol) + CoA. The catalysed reaction is (5Z,8Z,11Z,14Z)-eicosatetraenoyl-CoA + 1-hexadecanoyl-sn-glycero-3-phosphocholine = 1-hexadecanoyl-2-(5Z,8Z,11Z,14Z-eicosatetraenoyl)-sn-glycero-3-phosphocholine + CoA. It catalyses the reaction 1-octadecanoyl-sn-glycero-3-phospho-(1D-myo-inositol) + (5Z,8Z,11Z,14Z)-eicosatetraenoyl-CoA = 1-octadecanoyl-2-(5Z,8Z,11Z,14Z-eicosatetraenoyl)-sn-glycero-3-phospho-(1D-myo-inositol) + CoA. The protein operates within lipid metabolism; phospholipid metabolism. Its function is as follows. Acyltransferase which catalyzes the transfer of an acyl group from an acyl-CoA to a lysophosphatidylinositol (1-acylglycerophosphatidylinositol or LPI) leading to the production of a phosphatidylinositol (1,2-diacyl-sn-glycero-3-phosphoinositol or PI) and participates in the reacylation step of the phospholipid remodeling pathway also known as the Lands cycle. Prefers arachidonoyl-CoA as the acyl donor, thus contributing to the regulation of free levels arachidonic acid in cell. In liver, participates in the regulation of triglyceride metabolism through the phosphatidylinositol acyl-chain remodeling regulation. The polypeptide is Membrane-bound acylglycerophosphatidylinositol O-acyltransferase MBOAT7 (MBOAT7) (Bos taurus (Bovine)).